A 449-amino-acid polypeptide reads, in one-letter code: Trigger factor (449 aa).

The PPIase FKBP-type domain maps to 162 to 243 (GEFVTINITA…ITATKQRELP (82 aa)). A compositionally biased stretch (basic and acidic residues) spans 428-437 (GNEIDPKEYF). Residues 428–449 (GNEIDPKEYFGEEEVAETESEA) form a disordered region. Over residues 438 to 449 (GEEEVAETESEA) the composition is skewed to acidic residues.

Belongs to the FKBP-type PPIase family. Tig subfamily.

It is found in the cytoplasm. It carries out the reaction [protein]-peptidylproline (omega=180) = [protein]-peptidylproline (omega=0). In terms of biological role, involved in protein export. Acts as a chaperone by maintaining the newly synthesized protein in an open conformation. Functions as a peptidyl-prolyl cis-trans isomerase. This chain is Trigger factor, found in Corynebacterium glutamicum (strain R).